The chain runs to 60 residues: Large ribosomal subunit protein bL33 (60 aa).

The protein belongs to the bacterial ribosomal protein bL33 family.

In Chlorobium phaeovibrioides (strain DSM 265 / 1930) (Prosthecochloris vibrioformis (strain DSM 265)), this protein is Large ribosomal subunit protein bL33.